A 452-amino-acid chain; its full sequence is Selenide, water dikinase 2 (452 aa).

At Ala-2 the chain carries N-acetylalanine. At Ser-49 the chain carries Phosphoserine. Sec-63 is a catalytic residue. Position 63 (Sec-63) is a non-standard amino acid, selenocysteine. Residue Lys-66 coordinates ATP. The disordered stretch occupies residues 86-111 (PPLTSGLVGGQEETVQEGGLSTRPGP). Residues 95–105 (GQEETVQEGGL) are compositionally biased toward low complexity. ATP-binding positions include 121 to 123 (GMD), Asp-141, Asp-164, and 215 to 218 (GGQT). Mg(2+) is bound at residue Asp-123. Position 164 (Asp-164) interacts with Mg(2+). Mg(2+) is bound at residue Asp-319.

The protein belongs to the selenophosphate synthase 1 family. Class I subfamily. As to quaternary structure, homodimer. Mg(2+) is required as a cofactor. In terms of processing, truncated SEPHS2 proteins produced by failed UGA/Sec decoding are ubiquitinated by the CRL2(KLHDC3) complex, which recognizes the glycine (Gly) at the C-terminus of truncated SEPHS2 proteins.

The enzyme catalyses hydrogenselenide + ATP + H2O = selenophosphate + AMP + phosphate + 2 H(+). Synthesizes selenophosphate from selenide and ATP. The chain is Selenide, water dikinase 2 (Sephs2) from Mus musculus (Mouse).